Reading from the N-terminus, the 217-residue chain is MRLVLLGPPGAGKGTQAREINQRLAIPHISTGDMFREAIKRGTPLGRQAEVYIKGGRLVPDEVTIGLVQERLVQPDCRNGFLLDGFPRTVAQAEALDSWLSSRGERLDAVIDIEVPRDALLERLTGRRVCRQCGATYHVRYNPPAVPGKCDACGQDLVQRADDTEATVNKRLDVYNEQTAPLVNYYRQRGLLKEIDGSQAIPAVILAIGRALGRDWQ.

10–15 contacts ATP; sequence GAGKGT. The tract at residues 30 to 59 is NMP; that stretch reads STGDMFREAIKRGTPLGRQAEVYIKGGRLV. AMP contacts are provided by residues Thr-31, Arg-36, 57–59, 85–88, and Gln-92; these read RLV and GFPR. The interval 126–163 is LID; that stretch reads GRRVCRQCGATYHVRYNPPAVPGKCDACGQDLVQRADD. Arg-127 lines the ATP pocket. Positions 130 and 133 each coordinate Zn(2+). 136–137 lines the ATP pocket; sequence TY. Positions 150 and 153 each coordinate Zn(2+). Residues Arg-160 and Arg-171 each coordinate AMP. Gln-199 is a binding site for ATP.

The protein belongs to the adenylate kinase family. Monomer.

The protein localises to the cytoplasm. It catalyses the reaction AMP + ATP = 2 ADP. Its pathway is purine metabolism; AMP biosynthesis via salvage pathway; AMP from ADP: step 1/1. Catalyzes the reversible transfer of the terminal phosphate group between ATP and AMP. Plays an important role in cellular energy homeostasis and in adenine nucleotide metabolism. The sequence is that of Adenylate kinase from Moorella thermoacetica (strain ATCC 39073 / JCM 9320).